Reading from the N-terminus, the 482-residue chain is Protein translocase subunit SecY (482 aa).

A disordered region spans residues Met-1–Lys-22. The next 10 helical transmembrane spans lie at Ile-41–Gly-61, Phe-92–Leu-112, Leu-137–Leu-157, Ala-177–Ile-197, Ile-201–Ser-221, Ile-243–Leu-263, Val-303–Ile-323, Phe-342–Tyr-362, Val-405–Thr-425, and Gln-426–Ile-446.

This sequence belongs to the SecY/SEC61-alpha family. Component of the Sec protein translocase complex. Heterotrimer consisting of SecY, SecE and SecG subunits. The heterotrimers can form oligomers, although 1 heterotrimer is thought to be able to translocate proteins. Interacts with the ribosome. Interacts with SecDF, and other proteins may be involved. Interacts with SecA.

Its subcellular location is the cell membrane. Its function is as follows. The central subunit of the protein translocation channel SecYEG. Consists of two halves formed by TMs 1-5 and 6-10. These two domains form a lateral gate at the front which open onto the bilayer between TMs 2 and 7, and are clamped together by SecE at the back. The channel is closed by both a pore ring composed of hydrophobic SecY resides and a short helix (helix 2A) on the extracellular side of the membrane which forms a plug. The plug probably moves laterally to allow the channel to open. The ring and the pore may move independently. In Mycoplasma capricolum subsp. capricolum (strain California kid / ATCC 27343 / NCTC 10154), this protein is Protein translocase subunit SecY.